A 520-amino-acid polypeptide reads, in one-letter code: Putative lipase ATG15 (520 aa).

Residues 1 to 14 lie on the Cytoplasmic side of the membrane; that stretch reads MLHKSPSRKRFASP. A helical; Signal-anchor for type II membrane protein transmembrane segment spans residues 15–35; that stretch reads LHLGCILTLTVLCLIAYYFAL. Residues 36–520 lie on the Lumenal side of the membrane; sequence PDYLSVGKSS…WLGFCTKYEL (485 aa). Residues N173, N202, and N208 are each glycosylated (N-linked (GlcNAc...) asparagine). Catalysis depends on S332, which acts as the Charge relay system.

The protein belongs to the AB hydrolase superfamily. Lipase family. Binds to both phosphatidylinositol (PI) and phosphatidylinositol 3,5-bisphosphate (PIP2).

It localises to the endosome. The protein localises to the multivesicular body membrane. Its subcellular location is the prevacuolar compartment membrane. The enzyme catalyses a triacylglycerol + H2O = a diacylglycerol + a fatty acid + H(+). Functionally, lipase which is essential for lysis of subvacuolar cytoplasm to vacuole targeted bodies and intravacuolar autophagic bodies. Involved in the lysis of intravacuolar multivesicular body (MVB) vesicles. The intravacuolar membrane disintegration by ATG15 is critical to life span extension. This Saccharomyces cerevisiae (strain YJM789) (Baker's yeast) protein is Putative lipase ATG15 (ATG15).